Here is a 188-residue protein sequence, read N- to C-terminus: uncharacterized protein (188 aa).

The L5-specific motif motif lies at 62–77 (ITGEKPLIKLNESTEK).

Its subcellular location is the mitochondrion. This is an uncharacterized protein from Dictyostelium discoideum (Social amoeba).